Reading from the N-terminus, the 91-residue chain is Cell division topological specificity factor (91 aa).

It belongs to the MinE family.

Functionally, prevents the cell division inhibition by proteins MinC and MinD at internal division sites while permitting inhibition at polar sites. This ensures cell division at the proper site by restricting the formation of a division septum at the midpoint of the long axis of the cell. The sequence is that of Cell division topological specificity factor from Wigglesworthia glossinidia brevipalpis.